Reading from the N-terminus, the 143-residue chain is 3-dehydroquinate dehydratase (143 aa).

Tyr21 functions as the Proton acceptor in the catalytic mechanism. Positions 73, 79, and 86 each coordinate substrate. His99 serves as the catalytic Proton donor. Residues 100-101 (IS) and Arg110 contribute to the substrate site.

It belongs to the type-II 3-dehydroquinase family. Homododecamer.

It carries out the reaction 3-dehydroquinate = 3-dehydroshikimate + H2O. It functions in the pathway metabolic intermediate biosynthesis; chorismate biosynthesis; chorismate from D-erythrose 4-phosphate and phosphoenolpyruvate: step 3/7. Functionally, catalyzes a trans-dehydration via an enolate intermediate. This is 3-dehydroquinate dehydratase from Deinococcus radiodurans (strain ATCC 13939 / DSM 20539 / JCM 16871 / CCUG 27074 / LMG 4051 / NBRC 15346 / NCIMB 9279 / VKM B-1422 / R1).